The primary structure comprises 232 residues: Large ribosomal subunit protein uL1 (232 aa).

The protein belongs to the universal ribosomal protein uL1 family. In terms of assembly, part of the 50S ribosomal subunit.

Binds directly to 23S rRNA. The L1 stalk is quite mobile in the ribosome, and is involved in E site tRNA release. In terms of biological role, protein L1 is also a translational repressor protein, it controls the translation of the L11 operon by binding to its mRNA. This chain is Large ribosomal subunit protein uL1, found in Chlamydia caviae (strain ATCC VR-813 / DSM 19441 / 03DC25 / GPIC) (Chlamydophila caviae).